We begin with the raw amino-acid sequence, 232 residues long: Golgi SNAP receptor complex member 1 (232 aa).

The Cytoplasmic portion of the chain corresponds to methionine 1–aspartate 211. Coiled-coil stretches lie at residues tyrosine 6–lysine 23 and glycine 52–leucine 80. The helical; Anchor for type IV membrane protein transmembrane segment at serine 212–asparagine 232 threads the bilayer.

This sequence belongs to the GOSR1 family. In terms of assembly, component of several multiprotein Golgi SNARE complexes.

It is found in the golgi apparatus membrane. In terms of biological role, involved in transport from the ER to the Golgi apparatus as well as in intra-Golgi transport. It belongs to a super-family of proteins called t-SNAREs or soluble NSF (N-ethylmaleimide-sensitive factor) attachment protein receptor. This chain is Golgi SNAP receptor complex member 1 (Gos28), found in Drosophila melanogaster (Fruit fly).